Consider the following 469-residue polypeptide: 3-isopropylmalate dehydratase large subunit (469 aa).

Residues Cys349, Cys410, and Cys413 each contribute to the [4Fe-4S] cluster site.

This sequence belongs to the aconitase/IPM isomerase family. LeuC type 1 subfamily. In terms of assembly, heterodimer of LeuC and LeuD. [4Fe-4S] cluster serves as cofactor.

The enzyme catalyses (2R,3S)-3-isopropylmalate = (2S)-2-isopropylmalate. It functions in the pathway amino-acid biosynthesis; L-leucine biosynthesis; L-leucine from 3-methyl-2-oxobutanoate: step 2/4. Its function is as follows. Catalyzes the isomerization between 2-isopropylmalate and 3-isopropylmalate, via the formation of 2-isopropylmaleate. The sequence is that of 3-isopropylmalate dehydratase large subunit from Azoarcus sp. (strain BH72).